The sequence spans 408 residues: MAASPEDRNLSDIRLCPIAGIRLGTAAAAIKHVGRDDVLLIEMAEGSACAAVFTQNAFCAAPVTVAREHLRQAPRWLLVNSGNANAGTGTRGLADARASCEAVAALVGGRADRVMPFSTGVIGEYLPLDKIRAALPKAFEALSEDGWEAAARAIMTTDTRPKKAVRRIEIAGRPVVVSGIAKGAGMIHPNMATMLAFVATDARIGAGLLQSVLERAVNRSFNCITVDGDTSTNDACVLMASQRSEAPLIEPGSAHVEAFQSAVDAVLAELAEAIVRDGEGATKFIRILVEEAASEDEARLVGKTIAHSPLVKTAFFASDPNWGRILAAVGRAGCKDLDISRVAIWLDEVRIVAAGARDREYTEARGITVMRRPEITVRVSLGRGQASARVMTCDLSLDYVRINAEYRT.

Substrate-binding residues include Thr156, Lys182, Thr193, Glu279, Asn403, and Thr408. Thr193 (nucleophile) is an active-site residue.

This sequence belongs to the ArgJ family. As to quaternary structure, heterotetramer of two alpha and two beta chains.

Its subcellular location is the cytoplasm. It carries out the reaction N(2)-acetyl-L-ornithine + L-glutamate = N-acetyl-L-glutamate + L-ornithine. The catalysed reaction is L-glutamate + acetyl-CoA = N-acetyl-L-glutamate + CoA + H(+). It functions in the pathway amino-acid biosynthesis; L-arginine biosynthesis; L-ornithine and N-acetyl-L-glutamate from L-glutamate and N(2)-acetyl-L-ornithine (cyclic): step 1/1. Its pathway is amino-acid biosynthesis; L-arginine biosynthesis; N(2)-acetyl-L-ornithine from L-glutamate: step 1/4. Functionally, catalyzes two activities which are involved in the cyclic version of arginine biosynthesis: the synthesis of N-acetylglutamate from glutamate and acetyl-CoA as the acetyl donor, and of ornithine by transacetylation between N(2)-acetylornithine and glutamate. In Methylococcus capsulatus (strain ATCC 33009 / NCIMB 11132 / Bath), this protein is Arginine biosynthesis bifunctional protein ArgJ.